We begin with the raw amino-acid sequence, 161 residues long: N5-carboxyaminoimidazole ribonucleotide mutase (161 aa).

Serine 9, aspartate 12, and arginine 39 together coordinate substrate.

This sequence belongs to the AIR carboxylase family. Class I subfamily.

The catalysed reaction is 5-carboxyamino-1-(5-phospho-D-ribosyl)imidazole + H(+) = 5-amino-1-(5-phospho-D-ribosyl)imidazole-4-carboxylate. It participates in purine metabolism; IMP biosynthesis via de novo pathway; 5-amino-1-(5-phospho-D-ribosyl)imidazole-4-carboxylate from 5-amino-1-(5-phospho-D-ribosyl)imidazole (N5-CAIR route): step 2/2. Catalyzes the conversion of N5-carboxyaminoimidazole ribonucleotide (N5-CAIR) to 4-carboxy-5-aminoimidazole ribonucleotide (CAIR). This is N5-carboxyaminoimidazole ribonucleotide mutase from Vibrio vulnificus (strain CMCP6).